A 219-amino-acid chain; its full sequence is ATP synthase protein MI25 (219 aa).

Residues Ile-29–Ser-49 traverse the membrane as a helical segment.

The protein belongs to the ATPase protein MI25 family. As to quaternary structure, F-type ATPases have 2 components, CF(1) - the catalytic core - and CF(0) - the membrane proton channel. CF(1) has five subunits: alpha(3), beta(3), gamma(1), delta(1), epsilon(1). CF(0) has three main subunits: a, b and c.

The protein localises to the mitochondrion membrane. In terms of biological role, this is one of the chains of the nonenzymatic component (CF(0) subunit) of the mitochondrial ATPase complex. This chain is ATP synthase protein MI25, found in Zea mays (Maize).